Here is a 1107-residue protein sequence, read N- to C-terminus: Integrator complex subunit 6 homolog (1107 aa).

The 194-residue stretch at 2-195 folds into the VWFA domain; sequence LITFVVDTSG…LPMEPAIAPM (194 aa). Disordered stretches follow at residues 454 to 515, 542 to 572, 629 to 801, 818 to 861, and 946 to 1034; these read RIIN…SGNL, DNETSENSELSQELSESSTTGSSGGGSSSNI, TLRD…VSSP, QISS…IVNN, and VVRP…TTPN. Low complexity-rich tracts occupy residues 460 to 513 and 546 to 562; these read QQQQ…SGSG and SENSELSQELSESSTTG. Residues 629 to 639 are compositionally biased toward basic and acidic residues; the sequence is TLRDIDDDKKP. Residues 693–801 are compositionally biased toward low complexity; it reads PSLPTLNSLS…PIPSTTVSSP (109 aa). A compositionally biased stretch (pro residues) spans 846–857; sequence SPPPPPPPPPLP. A compositionally biased stretch (low complexity) spans 956 to 975; it reads PLTIDTLTSSSSSSTIPTTT. The segment covering 976 to 996 has biased composition (polar residues); sequence NGSLSTHDTPNTSPTLSSINY. Low complexity predominate over residues 997–1034; it reads NNNNNNNNNNNNNNNNNNNNNNNNNNRKNSIITTTTPN. Residues 1041-1103 form the MIF4G domain; it reads IKFVHKEIRR…SLISKLIGYI (63 aa).

This sequence belongs to the Integrator subunit 6 family. Component of the Integrator complex. The core complex associates with protein phosphatase 2A subunits, to form the Integrator-PP2A (INTAC) complex.

Its subcellular location is the nucleus. It is found in the chromosome. Its function is as follows. Component of the integrator complex, a multiprotein complex that terminates RNA polymerase II (Pol II) transcription in the promoter-proximal region of genes. The integrator complex provides a quality checkpoint during transcription elongation by driving premature transcription termination of transcripts that are unfavorably configured for transcriptional elongation: the complex terminates transcription by (1) catalyzing dephosphorylation of the C-terminal domain (CTD) of Pol II subunit polr2a, (2) degrading the exiting nascent RNA transcript via endonuclease activity and (3) promoting the release of Pol II from bound DNA. The integrator complex is also involved in terminating the synthesis of non-coding Pol II transcripts, such as enhancer RNAs (eRNAs), small nuclear RNAs (snRNAs), telomerase RNAs and long non-coding RNAs (lncRNAs). Within the integrator complex, INTS6 acts as a molecular adapter that promotes assembly of protein phosphatase 2A (PP2A) subunits to the integrator core complex, promoting recruitment of PP2A to transcription pause-release checkpoint. This Dictyostelium discoideum (Social amoeba) protein is Integrator complex subunit 6 homolog (ints6).